A 261-amino-acid polypeptide reads, in one-letter code: Cytochrome c oxidase subunit 3 (261 aa).

Residues 1-15 (MTHQTHAYHTVNPSP) lie on the Mitochondrial matrix side of the membrane. The chain crosses the membrane as a helical span at residues 16-34 (WPLTGALSALLMTSGLIMW). Topologically, residues 35–40 (FHFNSP) are mitochondrial intermembrane. A helical transmembrane segment spans residues 41–66 (LLLVLGLTTNFLTMYQWWRDIIREST). The Mitochondrial matrix portion of the chain corresponds to 67-72 (FQGHHT). Residues 73 to 105 (TIVQKGLRYGMILFIVSEVFFFAGFFWAFYHSS) form a helical membrane-spanning segment. Residues 106–128 (LAPTPELGGCWPPTGINPLNPLE) are Mitochondrial intermembrane-facing. The helical transmembrane segment at 129–152 (VPLLNTSVLLASGVSITWAHHSLM) threads the bilayer. Topologically, residues 153–155 (EGH) are mitochondrial matrix. A helical membrane pass occupies residues 156-183 (RKHMLQALFITIALGVYFTLLQASEYYE). Residues 184–190 (APFTISD) are Mitochondrial intermembrane-facing. Residues 191-223 (GIYGSTFFVATGFHGLHVIIGSSFLIVCFMRQL) form a helical membrane-spanning segment. Topologically, residues 224–232 (KFHFTSSHH) are mitochondrial matrix. Residues 233–256 (FGFEAAAWYWHFVDVVWLFLYVSI) form a helical membrane-spanning segment. At 257–261 (YWWGS) the chain is on the mitochondrial intermembrane side.

It belongs to the cytochrome c oxidase subunit 3 family. In terms of assembly, component of the cytochrome c oxidase (complex IV, CIV), a multisubunit enzyme composed of 14 subunits. The complex is composed of a catalytic core of 3 subunits MT-CO1, MT-CO2 and MT-CO3, encoded in the mitochondrial DNA, and 11 supernumerary subunits COX4I, COX5A, COX5B, COX6A, COX6B, COX6C, COX7A, COX7B, COX7C, COX8 and NDUFA4, which are encoded in the nuclear genome. The complex exists as a monomer or a dimer and forms supercomplexes (SCs) in the inner mitochondrial membrane with NADH-ubiquinone oxidoreductase (complex I, CI) and ubiquinol-cytochrome c oxidoreductase (cytochrome b-c1 complex, complex III, CIII), resulting in different assemblies (supercomplex SCI(1)III(2)IV(1) and megacomplex MCI(2)III(2)IV(2)).

It is found in the mitochondrion inner membrane. It carries out the reaction 4 Fe(II)-[cytochrome c] + O2 + 8 H(+)(in) = 4 Fe(III)-[cytochrome c] + 2 H2O + 4 H(+)(out). In terms of biological role, component of the cytochrome c oxidase, the last enzyme in the mitochondrial electron transport chain which drives oxidative phosphorylation. The respiratory chain contains 3 multisubunit complexes succinate dehydrogenase (complex II, CII), ubiquinol-cytochrome c oxidoreductase (cytochrome b-c1 complex, complex III, CIII) and cytochrome c oxidase (complex IV, CIV), that cooperate to transfer electrons derived from NADH and succinate to molecular oxygen, creating an electrochemical gradient over the inner membrane that drives transmembrane transport and the ATP synthase. Cytochrome c oxidase is the component of the respiratory chain that catalyzes the reduction of oxygen to water. Electrons originating from reduced cytochrome c in the intermembrane space (IMS) are transferred via the dinuclear copper A center (CU(A)) of subunit 2 and heme A of subunit 1 to the active site in subunit 1, a binuclear center (BNC) formed by heme A3 and copper B (CU(B)). The BNC reduces molecular oxygen to 2 water molecules using 4 electrons from cytochrome c in the IMS and 4 protons from the mitochondrial matrix. The protein is Cytochrome c oxidase subunit 3 (MT-CO3) of Dasypus novemcinctus (Nine-banded armadillo).